The sequence spans 251 residues: DNA repair protein RecO (251 aa).

The protein belongs to the RecO family.

In terms of biological role, involved in DNA repair and RecF pathway recombination. The protein is DNA repair protein RecO of Nitratidesulfovibrio vulgaris (strain ATCC 29579 / DSM 644 / CCUG 34227 / NCIMB 8303 / VKM B-1760 / Hildenborough) (Desulfovibrio vulgaris).